A 188-amino-acid polypeptide reads, in one-letter code: Adenine phosphoribosyltransferase (188 aa).

It belongs to the purine/pyrimidine phosphoribosyltransferase family. Homodimer.

It is found in the cytoplasm. It carries out the reaction AMP + diphosphate = 5-phospho-alpha-D-ribose 1-diphosphate + adenine. It participates in purine metabolism; AMP biosynthesis via salvage pathway; AMP from adenine: step 1/1. Catalyzes a salvage reaction resulting in the formation of AMP, that is energically less costly than de novo synthesis. This is Adenine phosphoribosyltransferase from Burkholderia vietnamiensis (strain G4 / LMG 22486) (Burkholderia cepacia (strain R1808)).